The sequence spans 141 residues: Large ribosomal subunit protein uL11 (141 aa).

It belongs to the universal ribosomal protein uL11 family. As to quaternary structure, part of the ribosomal stalk of the 50S ribosomal subunit. Interacts with L10 and the large rRNA to form the base of the stalk. L10 forms an elongated spine to which L12 dimers bind in a sequential fashion forming a multimeric L10(L12)X complex. Post-translationally, one or more lysine residues are methylated.

In terms of biological role, forms part of the ribosomal stalk which helps the ribosome interact with GTP-bound translation factors. The protein is Large ribosomal subunit protein uL11 of Campylobacter fetus subsp. fetus (strain 82-40).